Reading from the N-terminus, the 330-residue chain is MPKVNENSFKKIEKDVLKLLPPRPHKIEISEGQKFAKSIRQALSKYVTSVNHPIDFFSNQMLDVPFRQPLYADFLIQAKTIHQKEPIGSFLFTFKQEDSGSSIDIIFSPVSFYKISGLDAEFAPSVHRISFVWYGADNCIEDTVPNLAELIEEGKFHQFLTPVGPLVENITSTFVTRIKSVVKGEVLNNKSPPENVKLLLPSDLFIDLDEPNIDTLAPKHLLSFYYACVTYPVLHNVPVMALTFIKSNKSIRDLFCHLKVIYSDIIRTKYIAMQNDFYINKMSFGALCKLGSSSSETVPRRGNYHFRGSSLPTVEVPDFVADPGPWMTIL.

The protein belongs to the herpesviridae TRX1 protein family. In terms of assembly, interacts with TRX2, MCP and capsid vertex component 2/CVC2.

The protein resides in the virion. The protein localises to the host nucleus. Its function is as follows. Structural component of the T=16 icosahedral capsid. The capsid is composed of pentamers and hexamers of major capsid protein/MCP, which are linked together by heterotrimers called triplexes. These triplexes are formed by a single molecule of triplex protein 1/TRX1 and two copies of triplex protein 2/TRX2. Additionally, TRX1 is required for efficient transport of TRX2 to the nucleus, which is the site of capsid assembly. The chain is Triplex capsid protein 1 from Saimiriine herpesvirus 2 (strain 11) (SaHV-2).